An 864-amino-acid polypeptide reads, in one-letter code: Translation initiation factor IF-2 (864 aa).

Residues 140-171 are compositionally biased toward basic and acidic residues; it reads DSRSLNTKKENKLKISNKDEQNKKFNQHRESN. The segment at 140 to 179 is disordered; it reads DSRSLNTKKENKLKISNKDEQNKKFNQHRESNSFDLNHKK. A tr-type G domain is found at 364–533; the sequence is IRAPVVTIMG…LLQAEMLELK (170 aa). Residues 373–380 form a G1 region; sequence GHVDHGKT. 373 to 380 is a binding site for GTP; sequence GHVDHGKT. The G2 stretch occupies residues 398–402; sequence GITQN. The G3 stretch occupies residues 419 to 422; that stretch reads DTPG. GTP contacts are provided by residues 419–423 and 473–476; these read DTPGH and NKID. Positions 473 to 476 are G4; the sequence is NKID. Positions 509–511 are G5; that stretch reads SAK.

Belongs to the TRAFAC class translation factor GTPase superfamily. Classic translation factor GTPase family. IF-2 subfamily.

It is found in the cytoplasm. Its function is as follows. One of the essential components for the initiation of protein synthesis. Protects formylmethionyl-tRNA from spontaneous hydrolysis and promotes its binding to the 30S ribosomal subunits. Also involved in the hydrolysis of GTP during the formation of the 70S ribosomal complex. In Buchnera aphidicola subsp. Acyrthosiphon pisum (strain Tuc7), this protein is Translation initiation factor IF-2.